A 63-amino-acid polypeptide reads, in one-letter code: Large ribosomal subunit protein bL28 (63 aa).

The protein belongs to the bacterial ribosomal protein bL28 family.

This chain is Large ribosomal subunit protein bL28, found in Symbiobacterium thermophilum (strain DSM 24528 / JCM 14929 / IAM 14863 / T).